The following is a 1077-amino-acid chain: Carbamoyl phosphate synthase large chain (1077 aa).

Residues methionine 1–glutamate 403 form a carboxyphosphate synthetic domain region. ATP is bound by residues arginine 129, arginine 169, glycine 175, glycine 176, glutamate 208, leucine 210, glutamate 215, glycine 241, isoleucine 242, histidine 243, glutamine 285, and glutamate 299. Residues aspartate 133–valine 328 form the ATP-grasp 1 domain. The Mg(2+) site is built by glutamine 285, glutamate 299, and asparagine 301. Glutamine 285, glutamate 299, and asparagine 301 together coordinate Mn(2+). Residues valine 404–alanine 553 are oligomerization domain. Residues asparagine 554 to glycine 935 form a carbamoyl phosphate synthetic domain region. Residues glutamine 678–alanine 869 enclose the ATP-grasp 2 domain. ATP contacts are provided by arginine 714, arginine 753, leucine 755, glutamate 760, glycine 785, valine 786, histidine 787, serine 788, glutamine 828, and glutamate 840. Residues glutamine 828, glutamate 840, and asparagine 842 each coordinate Mg(2+). Residues glutamine 828, glutamate 840, and asparagine 842 each contribute to the Mn(2+) site. Residues asparagine 936–alanine 1077 form the MGS-like domain. An allosteric domain region spans residues asparagine 936–alanine 1077.

Belongs to the CarB family. As to quaternary structure, composed of two chains; the small (or glutamine) chain promotes the hydrolysis of glutamine to ammonia, which is used by the large (or ammonia) chain to synthesize carbamoyl phosphate. Tetramer of heterodimers (alpha,beta)4. It depends on Mg(2+) as a cofactor. Mn(2+) is required as a cofactor.

It catalyses the reaction hydrogencarbonate + L-glutamine + 2 ATP + H2O = carbamoyl phosphate + L-glutamate + 2 ADP + phosphate + 2 H(+). The enzyme catalyses hydrogencarbonate + NH4(+) + 2 ATP = carbamoyl phosphate + 2 ADP + phosphate + 2 H(+). It functions in the pathway amino-acid biosynthesis; L-arginine biosynthesis; carbamoyl phosphate from bicarbonate: step 1/1. The protein operates within pyrimidine metabolism; UMP biosynthesis via de novo pathway; (S)-dihydroorotate from bicarbonate: step 1/3. In terms of biological role, large subunit of the glutamine-dependent carbamoyl phosphate synthetase (CPSase). CPSase catalyzes the formation of carbamoyl phosphate from the ammonia moiety of glutamine, carbonate, and phosphate donated by ATP, constituting the first step of 2 biosynthetic pathways, one leading to arginine and/or urea and the other to pyrimidine nucleotides. The large subunit (synthetase) binds the substrates ammonia (free or transferred from glutamine from the small subunit), hydrogencarbonate and ATP and carries out an ATP-coupled ligase reaction, activating hydrogencarbonate by forming carboxy phosphate which reacts with ammonia to form carbamoyl phosphate. In Vibrio vulnificus (strain CMCP6), this protein is Carbamoyl phosphate synthase large chain.